A 362-amino-acid polypeptide reads, in one-letter code: Ferredoxin--NADP reductase, leaf-type isozyme, chloroplastic (362 aa).

The tract at residues Met1–Ser20 is disordered. The transit peptide at Met1 to Ala62 directs the protein to the chloroplast. Positions Ser10–Ser20 are enriched in low complexity. In terms of domain architecture, FAD-binding FR-type spans Lys83–Met205. Residues Arg141 to Ser144, Cys162 to Lys164, Tyr168, Val179 to Ser181, and Thr220 each bind FAD. Residues Ser144 and Lys164 each contribute to the NADP(+) site. NADP(+) is bound by residues Thr220, Val252–Pro253, Ser282–Arg283, Lys292, Gly321–Leu322, and Glu360.

It belongs to the ferredoxin--NADP reductase type 1 family. FAD is required as a cofactor.

The protein resides in the plastid. The protein localises to the chloroplast stroma. It is found in the chloroplast thylakoid membrane. It carries out the reaction 2 reduced [2Fe-2S]-[ferredoxin] + NADP(+) + H(+) = 2 oxidized [2Fe-2S]-[ferredoxin] + NADPH. Its pathway is energy metabolism; photosynthesis. May play a key role in regulating the relative amounts of cyclic and non-cyclic electron flow to meet the demands of the plant for ATP and reducing power. The polypeptide is Ferredoxin--NADP reductase, leaf-type isozyme, chloroplastic (PETH) (Nicotiana tabacum (Common tobacco)).